Reading from the N-terminus, the 301-residue chain is ADP,ATP carrier protein 1 (301 aa).

Solcar repeat units lie at residues 8 to 100 (YGFA…YKQV), 113 to 203 (RYFL…AKGM), and 210 to 299 (TSIF…VKAL). 5 helical membrane passes run 10-39 (FAKD…LLLQ), 77-101 (LANV…KQVF), 112-132 (WRYF…SLCF), 181-201 (VSVQ…DTAK), and 213-233 (FVSW…SYPF). ADP-binding residues include Arg-82 and Lys-94. Arg-237 serves as a coordination point for ADP. The important for transport activity stretch occupies residues 237-242 (RRRMMM). The short motif at 237-242 (RRRMMM) is the Nucleotide carrier signature motif element. The chain crosses the membrane as a helical span at residues 276–293 (AFSNVLRGTGGALVLVFY).

Belongs to the mitochondrial carrier (TC 2.A.29) family. Monomer.

It is found in the mitochondrion inner membrane. The catalysed reaction is ADP(in) + ATP(out) = ADP(out) + ATP(in). With respect to regulation, the matrix-open state (m-state) is inhibited by the membrane-permeable bongkrekic acid (BKA). The cytoplasmic-open state (c-state) is inhibited by the membrane-impermeable toxic inhibitor carboxyatractyloside (CATR). Its function is as follows. ADP:ATP antiporter that mediates import of ADP into the mitochondrial matrix for ATP synthesis, and export of ATP out to fuel the cell. Cycles between the cytoplasmic-open state (c-state) and the matrix-open state (m-state): operates by the alternating access mechanism with a single substrate-binding site intermittently exposed to either the cytosolic (c-state) or matrix (m-state) side of the inner mitochondrial membrane. The chain is ADP,ATP carrier protein 1 from Anopheles gambiae (African malaria mosquito).